Reading from the N-terminus, the 390-residue chain is Chorismate synthase 2 (390 aa).

NADP(+) is bound by residues Arg-39 and Arg-45. FMN-binding positions include 132 to 134 (RSS), 253 to 254 (NA), Gly-298, 313 to 317 (KPIPT), and Arg-339.

Belongs to the chorismate synthase family. Homotetramer. FMNH2 serves as cofactor.

The enzyme catalyses 5-O-(1-carboxyvinyl)-3-phosphoshikimate = chorismate + phosphate. It participates in metabolic intermediate biosynthesis; chorismate biosynthesis; chorismate from D-erythrose 4-phosphate and phosphoenolpyruvate: step 7/7. Catalyzes the anti-1,4-elimination of the C-3 phosphate and the C-6 proR hydrogen from 5-enolpyruvylshikimate-3-phosphate (EPSP) to yield chorismate, which is the branch point compound that serves as the starting substrate for the three terminal pathways of aromatic amino acid biosynthesis. This reaction introduces a second double bond into the aromatic ring system. The chain is Chorismate synthase 2 from Bacillus thuringiensis subsp. konkukian (strain 97-27).